Consider the following 544-residue polypeptide: Membrane protein insertase YidC (544 aa).

The next 6 helical transmembrane spans lie at 13-33, 321-341, 343-363, 409-429, 461-481, and 506-526; these read LSLF…SWML, LWYL…DVIP, WGLS…PLTF, LGGC…YSLV, LYFV…FTQL, and MPIM…IYWI.

Belongs to the OXA1/ALB3/YidC family. Type 1 subfamily. Interacts with the Sec translocase complex via SecD. Specifically interacts with transmembrane segments of nascent integral membrane proteins during membrane integration.

It is found in the cell inner membrane. Required for the insertion and/or proper folding and/or complex formation of integral membrane proteins into the membrane. Involved in integration of membrane proteins that insert both dependently and independently of the Sec translocase complex, as well as at least some lipoproteins. Aids folding of multispanning membrane proteins. The polypeptide is Membrane protein insertase YidC (Borreliella afzelii (strain PKo) (Borrelia afzelii)).